Here is a 442-residue protein sequence, read N- to C-terminus: Glutamate synthase large subunit-like protein (442 aa).

The segment at 108-133 (LGRGATASGTSTTTGDGGMTDEERGH) is disordered. Residues 109 to 121 (GRGATASGTSTTT) are compositionally biased toward low complexity.

This sequence belongs to the glutamate synthase family.

This Rhizobium meliloti (strain 1021) (Ensifer meliloti) protein is Glutamate synthase large subunit-like protein (glxD).